The chain runs to 476 residues: Eukaryotic translation initiation factor 3 subunit L (476 aa).

Positions 257-452 (DAIRMFSHIL…DLDYALEKDL (196 aa)) constitute a PCI domain.

This sequence belongs to the eIF-3 subunit L family. As to quaternary structure, component of the eukaryotic translation initiation factor 3 (eIF-3) complex.

It is found in the cytoplasm. In terms of biological role, component of the eukaryotic translation initiation factor 3 (eIF-3) complex, which is involved in protein synthesis of a specialized repertoire of mRNAs and, together with other initiation factors, stimulates binding of mRNA and methionyl-tRNAi to the 40S ribosome. The eIF-3 complex specifically targets and initiates translation of a subset of mRNAs involved in cell proliferation. This is Eukaryotic translation initiation factor 3 subunit L from Emericella nidulans (strain FGSC A4 / ATCC 38163 / CBS 112.46 / NRRL 194 / M139) (Aspergillus nidulans).